A 376-amino-acid chain; its full sequence is Lipoyl synthase 1, chloroplastic (376 aa).

The span at 1 to 13 shows a compositional bias: polar residues; the sequence is MIEQSLSKPSFSL. Disordered regions lie at residues 1 to 25 and 47 to 75; these read MIEQ…KSKS and IDAK…DPNV. A chloroplast-targeting transit peptide spans 1–35; sequence MIEQSLSKPSFSLSIPIPQPPKSKSSFLCSYSKIR. Positions 107, 112, 118, 138, 142, 145, and 353 each coordinate [4Fe-4S] cluster. Residues 121 to 342 enclose the Radical SAM core domain; sequence GGGDGIATAT…KEYGESIGFR (222 aa).

It belongs to the radical SAM superfamily. Lipoyl synthase family. [4Fe-4S] cluster serves as cofactor.

The protein localises to the plastid. It is found in the chloroplast. It carries out the reaction [[Fe-S] cluster scaffold protein carrying a second [4Fe-4S](2+) cluster] + N(6)-octanoyl-L-lysyl-[protein] + 2 oxidized [2Fe-2S]-[ferredoxin] + 2 S-adenosyl-L-methionine + 4 H(+) = [[Fe-S] cluster scaffold protein] + N(6)-[(R)-dihydrolipoyl]-L-lysyl-[protein] + 4 Fe(3+) + 2 hydrogen sulfide + 2 5'-deoxyadenosine + 2 L-methionine + 2 reduced [2Fe-2S]-[ferredoxin]. It functions in the pathway protein modification; protein lipoylation via endogenous pathway; protein N(6)-(lipoyl)lysine from octanoyl-[acyl-carrier-protein]: step 2/2. In terms of biological role, catalyzes the radical-mediated insertion of two sulfur atoms into the C-6 and C-8 positions of the octanoyl moiety bound to the lipoyl domains of lipoate-dependent enzymes, thereby converting the octanoylated domains into lipoylated derivatives. The polypeptide is Lipoyl synthase 1, chloroplastic (Populus trichocarpa (Western balsam poplar)).